A 122-amino-acid polypeptide reads, in one-letter code: Large ribosomal subunit protein uL14c (122 aa).

It belongs to the universal ribosomal protein uL14 family. Part of the 50S ribosomal subunit.

It localises to the plastid. Its subcellular location is the chloroplast. In terms of biological role, binds to 23S rRNA. This is Large ribosomal subunit protein uL14c from Nicotiana tomentosiformis (Tobacco).